A 414-amino-acid chain; its full sequence is Esterase FrsA (414 aa).

The protein belongs to the FrsA family.

It carries out the reaction a carboxylic ester + H2O = an alcohol + a carboxylate + H(+). Its function is as follows. Catalyzes the hydrolysis of esters. In Shigella boydii serotype 4 (strain Sb227), this protein is Esterase FrsA.